We begin with the raw amino-acid sequence, 695 residues long: Elongation factor G (695 aa).

Residues 8-282 form the tr-type G domain; it reads EKTRNIGIMA…AVLDYLPAPT (275 aa). GTP contacts are provided by residues 17–24, 81–85, and 135–138; these read AHIDAGKT, DTPGH, and NKMD.

This sequence belongs to the TRAFAC class translation factor GTPase superfamily. Classic translation factor GTPase family. EF-G/EF-2 subfamily.

It is found in the cytoplasm. Catalyzes the GTP-dependent ribosomal translocation step during translation elongation. During this step, the ribosome changes from the pre-translocational (PRE) to the post-translocational (POST) state as the newly formed A-site-bound peptidyl-tRNA and P-site-bound deacylated tRNA move to the P and E sites, respectively. Catalyzes the coordinated movement of the two tRNA molecules, the mRNA and conformational changes in the ribosome. The chain is Elongation factor G from Listeria monocytogenes serotype 4b (strain CLIP80459).